Here is a 38-residue protein sequence, read N- to C-terminus: Photosystem II reaction center protein L (38 aa).

A helical membrane pass occupies residues Ser-17–Phe-37.

It belongs to the PsbL family. PSII is composed of 1 copy each of membrane proteins PsbA, PsbB, PsbC, PsbD, PsbE, PsbF, PsbH, PsbI, PsbJ, PsbK, PsbL, PsbM, PsbT, PsbX, PsbY, PsbZ, Psb30/Ycf12, at least 3 peripheral proteins of the oxygen-evolving complex and a large number of cofactors. It forms dimeric complexes.

Its subcellular location is the plastid. The protein resides in the chloroplast thylakoid membrane. In terms of biological role, one of the components of the core complex of photosystem II (PSII). PSII is a light-driven water:plastoquinone oxidoreductase that uses light energy to abstract electrons from H(2)O, generating O(2) and a proton gradient subsequently used for ATP formation. It consists of a core antenna complex that captures photons, and an electron transfer chain that converts photonic excitation into a charge separation. This subunit is found at the monomer-monomer interface and is required for correct PSII assembly and/or dimerization. This Ephedra sinica (Chinese ephedra) protein is Photosystem II reaction center protein L.